A 262-amino-acid polypeptide reads, in one-letter code: 3-methyl-2-oxobutanoate hydroxymethyltransferase (262 aa).

Mg(2+)-binding residues include Asp44 and Asp83. 3-methyl-2-oxobutanoate-binding positions include 44-45, Asp83, and Lys111; that span reads DS. Position 113 (Glu113) interacts with Mg(2+). Catalysis depends on Glu180, which acts as the Proton acceptor.

This sequence belongs to the PanB family. In terms of assembly, homodecamer; pentamer of dimers. Mg(2+) serves as cofactor.

The protein localises to the cytoplasm. The enzyme catalyses 3-methyl-2-oxobutanoate + (6R)-5,10-methylene-5,6,7,8-tetrahydrofolate + H2O = 2-dehydropantoate + (6S)-5,6,7,8-tetrahydrofolate. Its pathway is cofactor biosynthesis; (R)-pantothenate biosynthesis; (R)-pantoate from 3-methyl-2-oxobutanoate: step 1/2. Its function is as follows. Catalyzes the reversible reaction in which hydroxymethyl group from 5,10-methylenetetrahydrofolate is transferred onto alpha-ketoisovalerate to form ketopantoate. The sequence is that of 3-methyl-2-oxobutanoate hydroxymethyltransferase from Alcanivorax borkumensis (strain ATCC 700651 / DSM 11573 / NCIMB 13689 / SK2).